We begin with the raw amino-acid sequence, 66 residues long: uncharacterized protein (66 aa).

Helical transmembrane passes span 3–23 (LIHVLAALPFIGILLGIPFAN) and 34–54 (FILAYIVMWALLTSALMAIVY).

The protein localises to the cell membrane. This is an uncharacterized protein from Bacillus subtilis (strain 168).